The chain runs to 365 residues: Chorismate synthase (365 aa).

2 residues coordinate NADP(+): Arg-48 and Arg-54. FMN is bound by residues 125–127 (RSS), 237–238 (NA), Gly-277, 292–296 (KPTSS), and Arg-318.

Belongs to the chorismate synthase family. As to quaternary structure, homotetramer. Requires FMNH2 as cofactor.

The enzyme catalyses 5-O-(1-carboxyvinyl)-3-phosphoshikimate = chorismate + phosphate. Its pathway is metabolic intermediate biosynthesis; chorismate biosynthesis; chorismate from D-erythrose 4-phosphate and phosphoenolpyruvate: step 7/7. In terms of biological role, catalyzes the anti-1,4-elimination of the C-3 phosphate and the C-6 proR hydrogen from 5-enolpyruvylshikimate-3-phosphate (EPSP) to yield chorismate, which is the branch point compound that serves as the starting substrate for the three terminal pathways of aromatic amino acid biosynthesis. This reaction introduces a second double bond into the aromatic ring system. This is Chorismate synthase from Paracidovorax citrulli (strain AAC00-1) (Acidovorax citrulli).